The primary structure comprises 90 residues: Small regulatory polypeptide of amino acid response (90 aa).

At 1–18 (MGAKAPRGPKVAQWAMET) the chain is on the lumenal side. The helical transmembrane segment at 19–39 (AVIGVVVVLFVVTVAITCVLC) threads the bilayer. Residues 40–90 (CFSCDSRAQDPQGGPGRSFTVATFRQEASLFTGPVRHAQPVPSAQDFWTFM) lie on the Cytoplasmic side of the membrane.

In terms of assembly, interacts with components of the lysosomal V-ATPase complex. Interacts with ATP6V0A1. Interacts with ATP6V0A2. Highly expressed in lung, heart and skeletal muscle.

It localises to the late endosome membrane. Its subcellular location is the lysosome membrane. Its function is as follows. Negative regulator of amino acid sensing and mTORC1, a signaling complex promoting cell growth in response to growth factors, energy levels and amino acids. Negatively regulates mTORC1 activation by inhibiting recruitment of mTORC1 to lysosomes upon stimulation with amino acids: acts by promoting the formation of a tightly bound supercomplex composed of the lysosomal V-ATPase, Ragulator and Rag GTPases, preventing recruitment of mTORC1. Acts as a regulator of muscle regeneration following injury by regulating mTORC1 activation. This Homo sapiens (Human) protein is Small regulatory polypeptide of amino acid response.